The primary structure comprises 906 residues: MSPVDFKDKVVIITGAGGGLGKYYSLEFAKLGAKVVVNDLGGALNGQGGNSKAADVVVDEIVKNGGVAVADYNNVLDGDKIVETAVKNFGTVHVIINNAGILRDASMKKMTEKDYKLVIDVHLNGAFAVTKAAWPYFQKQKYGRIVNTSSPAGLYGNFGQANYASAKSALLGFAETLAKEGAKYNIKANAIAPLARSRMTESILPPPMLEKLGPEKVAPLVLYLSSAENELTGQFFEVAAGFYAQIRWERSGGVLFKPDQSFTAEVVAKRFSEILDYDDSRKPEYLKNQYPFMLNDYATLTNEARKLPANDASGAPTVSLKDKVVLITGAGAGLGKEYAKWFAKYGAKVVVNDFKDATKTVDEIKAAGGEAWPDQHDVAKDSEAIIKNVIDKYGTIDILVNNAGILRDRSFAKMSKQEWDSVQQVHLIGTFNLSRLAWPYFVEKQFGRIINITSTSGIYGNFGQANYSSSKAGILGLSKTMAIEGAKNNIKVNIVAPHAETAMTLTIFREQDKNLYHADQVAPLLVYLGTDDVPVTGETFEIGGGWIGNTRWQRAKGAVSHDEHTTVEFIKEHLNEITDFTTDTENPKSTTESSMAILSAVGGDDDDDDEDEEEDEGDEEEDEEDEEEDDPVWRFDDRDVILYNIALGATTKQLKYVYENDSDFQVIPTFGHLITFNSGKSQNSFAKLLRNFNPMLLLHGEHYLKVHSWPPPTEGEIKTTFEPIATTPKGTNVVIVHGSKSVDNKSGELIYSNEATYFIRNCQADNKVYADRPAFATNQFLAPKRAPDYQVDVPVSEDLAALYRLSGDRNPLHIDPNFAKGAKFPKPILHGMCTYGLSAKALIDKFGMFNEIKARFTGIVFPGETLRVLAWKESDDTIVFQTHVVDRGTIAINNAAIKLVGDKAKI.

Short-chain dehydrogenase like stretches follow at residues 5 to 228 (DFKD…SSAE) and 319 to 532 (SLKD…GTDD). Positions 13, 52, 98, and 131 each coordinate NADP(+). Residues Ser149 and Tyr163 each act as proton donor in the active site. Residues Tyr163 and Lys167 each contribute to the NADP(+) site. Residue Tyr163 is the Proton acceptor of the active site. Lys167 serves as the catalytic Lowers pKa of active site Tyr. Tyr467 acts as the Proton acceptor in catalysis. Positions 600–633 (AVGGDDDDDDEDEEEDEGDEEEDEEDEEEDDPVW) are disordered. The span at 603–630 (GDDDDDDEDEEEDEGDEEEDEEDEEEDD) shows a compositional bias: acidic residues. Positions 699, 700, 729, 757, 808, 810, 831, 856, 857, and 858 each coordinate (3R)-3-hydroxydecanoyl-CoA. The 112-residue stretch at 782–893 (APKRAPDYQV…VVDRGTIAIN (112 aa)) folds into the MaoC-like domain. The Microbody targeting signal motif lies at 904-906 (AKI).

It belongs to the short-chain dehydrogenases/reductases (SDR) family. Monomer.

It localises to the peroxisome. It carries out the reaction a (3R)-3-hydroxyacyl-CoA = a (2E)-enoyl-CoA + H2O. The catalysed reaction is a (3R)-3-hydroxyacyl-CoA + NAD(+) = a 3-oxoacyl-CoA + NADH + H(+). It functions in the pathway lipid metabolism; fatty acid beta-oxidation. Its function is as follows. Second trifunctional enzyme acting on the beta-oxidation pathway for fatty acids, possessing hydratase-dehydrogenase-epimerase activities. Converts trans-2-enoyl-CoA via D-3-hydroxyacyl-CoA to 3-ketoacyl-CoA. The chain is Peroxisomal hydratase-dehydrogenase-epimerase from Candida tropicalis (Yeast).